A 110-amino-acid polypeptide reads, in one-letter code: Chagasin (110 aa).

A BC loop motif is present at residues 29–34 (NPTTGF). Residues 59–68 (PPDSKLLGAG) carry the DE loop motif. An FG loop motif is present at residues 91–100 (RPWTGPSHDS).

It belongs to the protease inhibitor I42 family. As to quaternary structure, interacts with cruzipain.

It localises to the flagellar pocket. The protein localises to the cytoplasmic vesicle. Its subcellular location is the cell surface. Cysteine protease inhibitor. Inhibits cysteine protease cruzipain. The sequence is that of Chagasin (cha) from Trypanosoma cruzi.